The chain runs to 175 residues: Large ribosomal subunit protein uL22 (175 aa).

A disordered region spans residues 113–175 (VESRPVKDQR…EASETKGGSD (63 aa)). The segment covering 136-154 (KTAGRAPAKKAGASSGATK) has biased composition (low complexity). The span at 166–175 (EASETKGGSD) shows a compositional bias: basic and acidic residues.

Belongs to the universal ribosomal protein uL22 family. In terms of assembly, part of the 50S ribosomal subunit.

Functionally, this protein binds specifically to 23S rRNA; its binding is stimulated by other ribosomal proteins, e.g. L4, L17, and L20. It is important during the early stages of 50S assembly. It makes multiple contacts with different domains of the 23S rRNA in the assembled 50S subunit and ribosome. The globular domain of the protein is located near the polypeptide exit tunnel on the outside of the subunit, while an extended beta-hairpin is found that lines the wall of the exit tunnel in the center of the 70S ribosome. The protein is Large ribosomal subunit protein uL22 of Mycobacterium leprae (strain TN).